Here is an 835-residue protein sequence, read N- to C-terminus: MSDSDGKKTLGLRGSGSRPGNVKQSFSHGRTKNVVVETKRKRVVVPKPGAGKGGAGGVAAGDASRRPAGISDAEMDRRLKALQAAKAREAEEAAQREAEEKARAEERERRRAEQEAKEREQREAEEKARQKAEEEERKRQEEAEAAKKRAAADKAAAAAPKSDAGVAPARPAPGGAPKPAAGPRKAEREREERGRGAKGRNDGGRRSGKLTLSQATGGEGGRQRSVASMKRKQERARQKAMGQVEREKIIRDVQLPEAIVVSELANRMAERVADVVKALMNMGMMVTQNQTIDADTAELIIEEFGHNVVRVSDADVEDVIKEIEDKEEDLQPRPPVITIMGHVDHGKTSLLDAIRDAKVVAGEAGGITQHIGAYQVTTDSGAVLSFLDTPGHAAFTSMRSRGAQVTDIVVLVVAADDSVMPQTVEAINHAKAAGVPMIVAINKIDKPAADPNKVRAELLQHEVIVEAMSGEVQDVEVSAHTGQGLDELLEAIALQAEILELKANPNRAAQGAVIEAQLDVGRGPVATVLVQTGTLRQGDIFVVGEQYGKVRALINDKGERVKEAGPSVPVEVLGLNGTPEAGDVLNVTETEAQAREIAEYREQAAKDKRAAAGAATTLEQLMQKAKEDENVSELPILVKADVQGSAEAIVQAMEKIGNDEVRVRVLHSGVGAITETDIGLAEASGAPVMGFNVRANASARNTANQKGVEIRYYSVIYDLVDDVKAAASGLLSAEIKENFIGYAEIKDVFKVSNVGKVAGCLVTEGVARRSAGVRLLRDNVVIHEGTLKTLKRFKDEVAEVQSGQECGMAFENYDDIRPKDVIEIFEREEVTRTLD.

The segment at 1-240 (MSDSDGKKTL…RKQERARQKA (240 aa)) is disordered. Gly residues predominate over residues 50–59 (AGKGGAGGVA). Residues 86 to 152 (KAREAEEAAQ…AEAAKKRAAA (67 aa)) are compositionally biased toward basic and acidic residues. Positions 153–169 (DKAAAAAPKSDAGVAPA) are enriched in low complexity. Residues 184–205 (RKAEREREERGRGAKGRNDGGR) show a composition bias toward basic and acidic residues. One can recognise a tr-type G domain in the interval 332–500 (PRPPVITIMG…AIALQAEILE (169 aa)). Residues 341-348 (GHVDHGKT) are G1. 341–348 (GHVDHGKT) is a binding site for GTP. The interval 366–370 (GITQH) is G2. Residues 388–391 (DTPG) form a G3 region. Residues 388-392 (DTPGH) and 442-445 (NKID) each bind GTP. The interval 442–445 (NKID) is G4. The G5 stretch occupies residues 478-480 (SAH).

This sequence belongs to the TRAFAC class translation factor GTPase superfamily. Classic translation factor GTPase family. IF-2 subfamily.

The protein localises to the cytoplasm. One of the essential components for the initiation of protein synthesis. Protects formylmethionyl-tRNA from spontaneous hydrolysis and promotes its binding to the 30S ribosomal subunits. Also involved in the hydrolysis of GTP during the formation of the 70S ribosomal complex. The chain is Translation initiation factor IF-2 from Ruegeria sp. (strain TM1040) (Silicibacter sp.).